The following is a 93-amino-acid chain: UPF0147 protein MM_1385 (93 aa).

The protein belongs to the UPF0147 family.

This chain is UPF0147 protein MM_1385, found in Methanosarcina mazei (strain ATCC BAA-159 / DSM 3647 / Goe1 / Go1 / JCM 11833 / OCM 88) (Methanosarcina frisia).